The primary structure comprises 237 residues: MFARGLKRKYGDQEEGVEGFGTVPSYSLQRQSLLDMSLVKLQLCHMLVEPNLCRSVLIANTVRQIQEEMSQDGVWHGMAPQNVDRAPVERLVSTEILCRTVRGAEEEHPAPELEDAPLQNSVSELPIVGSAPGQRNPQSSLWEMDSPQENRGSFQKSLDQIFETLENKNSSSVEELFSDVDSSYYDLDTVLTGMMSGTKSSLCNGLEGFAAATPPPSSTCKSDLAELDHVVEILVET.

One can recognise an SERTA domain in the interval Y26–G73.

In terms of tissue distribution, expressed preferentially in hematopoietic progenitors and mature blood cells. Expressed at low levels in the heart, lung, spleen, and thymus and at a higher level in muscle.

The protein resides in the nucleus. Functionally, may participate in the regulation of cell proliferation through the E2F/RB pathway. May be involved in molecular regulation of hematopoietic stem cells and progenitor cell lineage commitment and differentiation. This chain is Cell division cycle-associated protein 4 (Cdca4), found in Mus musculus (Mouse).